A 500-amino-acid chain; its full sequence is Transcription factor-like 5 protein (500 aa).

Pro residues-rich tracts occupy residues 1-12 (MSGPGPREPPPE) and 196-210 (AEPP…PPEP). Disordered regions lie at residues 1-34 (MSGP…ALGE) and 191-211 (FNSI…PEPG). The interval 347–356 (MRQLDTNVER) is R3 epitope (recognized by Chagas's antibodies). The segment at 365–410 (VGEGATATQGAWQSSESSQANLGEQAQSGPQGGRSQRRERHNRMER) is disordered. A compositionally biased stretch (polar residues) spans 370-393 (TATQGAWQSSESSQANLGEQAQSG). The bHLH domain occupies 400 to 450 (QRRERHNRMERDRRRRIRICCDELNLLVPFCNAETDKATTLQWTTAFLKYI). The interval 481-500 (SLVTCPAQGSLQSSPSMEIK) is R1 epitope (recognized by Chagas's antibodies).

Efficient DNA binding requires dimerization with another bHLH protein. Isoform 3 is testis specific. Isoform 2 is pancreas specific.

Its subcellular location is the nucleus. Its function is as follows. Putative transcription factor. Isoform 3 may play a role in early spermatogenesis. This Homo sapiens (Human) protein is Transcription factor-like 5 protein (TCFL5).